Consider the following 1012-residue polypeptide: Multiple C2 domain and transmembrane region protein 10 (1012 aa).

Positions M1–Y115 constitute a C2 1 domain. A disordered region spans residues E141 to M203. Basic residues predominate over residues R148 to K160. Composition is skewed to low complexity over residues V161–Q180 and R188–R202. C2 domains lie at S262 to Y376, K411 to F551, and Y585 to Y710. Residues E296, E344, N346, and E349 each contribute to the Ca(2+) site. 3 consecutive transmembrane segments (helical) span residues F810–M830, V841–L861, and A952–V972.

The protein belongs to the MCTP family. The cofactor is Ca(2+). As to expression, highly expressed in roots meristems, shoot apical meristems (SAMs) and in incipient leaf primordia. Observed in flowers.

It is found in the endoplasmic reticulum membrane. Its function is as follows. May function as a signaling molecule by regulating the trafficking of other regulators. This chain is Multiple C2 domain and transmembrane region protein 10, found in Arabidopsis thaliana (Mouse-ear cress).